The sequence spans 104 residues: MKMRGVSVGVLVVAMMSGLAMAGSCNSQEPDCGPSECCLQGWMRYSTRGCAPLGEAGSSCNVFTQAPVKGFYIGMCPCRAGLVCTRPSATCQLPSQDNTLDSYY.

Residues 1 to 22 form the signal peptide; that stretch reads MKMRGVSVGVLVVAMMSGLAMA. 5 disulfide bridges follow: Cys25-Cys38, Cys32-Cys50, Cys37-Cys76, Cys60-Cys84, and Cys78-Cys91.

The protein belongs to the AVIT (prokineticin) family.

The protein resides in the secreted. Cytokine directly involved in hematopoiesis. The polypeptide is Astakine (Pacifastacus leniusculus (Signal crayfish)).